Reading from the N-terminus, the 221-residue chain is Ribosomal RNA large subunit methyltransferase E (221 aa).

S-adenosyl-L-methionine-binding residues include Gly60, Trp62, Asp89, Asp105, and Asp134. Residue Lys174 is the Proton acceptor of the active site. The tract at residues 199 to 221 (KPKASRDKSSETFLLGRQLKHPG) is disordered.

This sequence belongs to the class I-like SAM-binding methyltransferase superfamily. RNA methyltransferase RlmE family.

It localises to the cytoplasm. It carries out the reaction uridine(2552) in 23S rRNA + S-adenosyl-L-methionine = 2'-O-methyluridine(2552) in 23S rRNA + S-adenosyl-L-homocysteine + H(+). Its function is as follows. Specifically methylates the uridine in position 2552 of 23S rRNA at the 2'-O position of the ribose in the fully assembled 50S ribosomal subunit. This is Ribosomal RNA large subunit methyltransferase E from Ralstonia nicotianae (strain ATCC BAA-1114 / GMI1000) (Ralstonia solanacearum).